A 177-amino-acid chain; its full sequence is Large ribosomal subunit protein uL6 (177 aa).

The protein belongs to the universal ribosomal protein uL6 family. In terms of assembly, part of the 50S ribosomal subunit.

This protein binds to the 23S rRNA, and is important in its secondary structure. It is located near the subunit interface in the base of the L7/L12 stalk, and near the tRNA binding site of the peptidyltransferase center. The protein is Large ribosomal subunit protein uL6 of Bartonella henselae (strain ATCC 49882 / DSM 28221 / CCUG 30454 / Houston 1) (Rochalimaea henselae).